A 686-amino-acid chain; its full sequence is ATP-dependent zinc metalloprotease FTSH 1, chloroplastic (686 aa).

The N-terminal 16 residues, 1 to 16 (MAPPCSISSASHLLIT), are a transit peptide targeting the chloroplast. A helical membrane pass occupies residues 173–193 (FLAFVGNLLFPFLAFAGLFFL). 272-279 (GPPGTGKT) provides a ligand contact to ATP. Zn(2+) is bound at residue His-494. Glu-495 is an active-site residue. The Zn(2+) site is built by His-498 and Asp-575.

This sequence in the N-terminal section; belongs to the AAA ATPase family. The protein in the C-terminal section; belongs to the peptidase M41 family. Requires Zn(2+) as cofactor.

The protein resides in the plastid. It is found in the chloroplast thylakoid membrane. Functionally, probable ATP-dependent zinc metallopeptidase. The protein is ATP-dependent zinc metalloprotease FTSH 1, chloroplastic (FTSH1) of Oryza sativa subsp. japonica (Rice).